We begin with the raw amino-acid sequence, 195 residues long: Archaetidylinositol phosphate synthase (195 aa).

Transmembrane regions (helical) follow at residues 27 to 47 and 54 to 74; these read IALPADYITLTGFLVACAASA and LITGAALLAASGFIDVLDGAV. The Mg(2+) site is built by Asp-68, Asp-71, Asp-89, and Asp-93. The active-site Proton acceptor is Asp-93. 2 consecutive transmembrane segments (helical) span residues 99-119 and 158-178; these read IIIIGITAGGFTGLLTGLLAL and LAGYLIHPWFMDAAIIVLAAL.

It belongs to the CDP-alcohol phosphatidyltransferase class-I family. The cofactor is Mn(2+). Mg(2+) serves as cofactor.

It localises to the cell membrane. The catalysed reaction is CDP-2,3-bis-O-(phytanyl)-sn-glycerol + 1D-myo-inositol 3-phosphate = saturated 1-archaetidyl-1D-myo-inositol 3-phosphate + CMP + H(+). It participates in lipid metabolism; phospholipid metabolism. Functionally, catalyzes the formation of archaetidylinositol phosphate (AIP) from CDP-archaeol (CDP-ArOH or CDP-2,3-bis-(O-phytanyl)-sn-glycerol) and 1L-myo-inositol 1-phosphate (IP or 1D-myo-inositol 3-phosphate). AIP is a precursor of archaetidyl-myo-inositol (AI), an ether-type inositol phospholipid ubiquitously distributed in archaea membranes and essential for glycolipid biosynthesis in archaea. This Methanothermobacter thermautotrophicus (strain ATCC 29096 / DSM 1053 / JCM 10044 / NBRC 100330 / Delta H) (Methanobacterium thermoautotrophicum) protein is Archaetidylinositol phosphate synthase.